The following is a 444-amino-acid chain: MTTRQPLYKSLYFQVIVAICIGIALGHYYPQFGVAVKPLGDGFIKLIKMIIAPIIFCTVVSGIAGMQNMKSVGKTGGYALLYFEIVSTIALLVGLIVVNIVQPGNGMHIDVSTLDASKVATYVAQGADQSVVGFLLNVIPTTIVGAFATGDILQVLMFSVIFGFALHRLGAYGKPILDFIDRFAHVMFNIINMIMKLAPIGAFGAMAFTIGAYGVGSLVQLGQLMICFYITCLAFILIVLGGIARMHGFSVLKMIRYIREELLIVLGTSSSESVLPRMLIKMERLGAKKSVVGLVIPTGYSFNLDGTAIYLTMAAVFIAQATDTHMDITHQITLLVVLLLSSKGAAGVTGSGFIVLAATLSAVGHLPVAGLALILGIDRFMSEARALTNLVGNAVATIVVAKWVKELDTDVLDAELASGGRGIADTRPEDDLGVAEGPTPSNVK.

Transmembrane regions (helical) follow at residues Val-15 to Ala-35, Leu-46 to Met-66, Tyr-78 to Val-98, Ile-143 to Gly-163, Pro-199 to Val-219, Leu-224 to Ala-244, Val-291 to Leu-311, Ile-332 to Gly-352, and Ile-354 to Ile-374. A disordered region spans residues Gly-422–Lys-444.

This sequence belongs to the dicarboxylate/amino acid:cation symporter (DAACS) (TC 2.A.23) family.

It localises to the cell inner membrane. Its function is as follows. Responsible for the transport of dicarboxylates such as succinate, fumarate, and malate from the periplasm across the membrane. This chain is C4-dicarboxylate transport protein, found in Pseudomonas fluorescens (strain Pf0-1).